We begin with the raw amino-acid sequence, 303 residues long: Probable 5-dehydro-4-deoxyglucarate dehydratase (303 aa).

Belongs to the DapA family.

It catalyses the reaction 5-dehydro-4-deoxy-D-glucarate + H(+) = 2,5-dioxopentanoate + CO2 + H2O. The protein operates within carbohydrate acid metabolism; D-glucarate degradation; 2,5-dioxopentanoate from D-glucarate: step 2/2. This is Probable 5-dehydro-4-deoxyglucarate dehydratase from Acinetobacter baumannii (strain ATCC 17978 / DSM 105126 / CIP 53.77 / LMG 1025 / NCDC KC755 / 5377).